The chain runs to 311 residues: Malate dehydrogenase (311 aa).

Residues 7-13 (GAAGGIG) and D34 contribute to the NAD(+) site. Substrate contacts are provided by R81 and R87. Residues N94 and 117-119 (ITN) each bind NAD(+). Substrate is bound by residues N119 and R153. H177 acts as the Proton acceptor in catalysis. M227 is a binding site for NAD(+).

This sequence belongs to the LDH/MDH superfamily. MDH type 1 family. As to quaternary structure, homodimer.

It carries out the reaction (S)-malate + NAD(+) = oxaloacetate + NADH + H(+). Catalyzes the reversible oxidation of malate to oxaloacetate. The polypeptide is Malate dehydrogenase (Shewanella sp. (strain ANA-3)).